The chain runs to 346 residues: MSKLLREVTPEERRLYYSGEWDAKKLPEFIVESIERREFGFDHTGEGPSDRKNAFSDVRDLEDYIRATAPYAAYSSVAFYRNPQEMEGWLGAELVFDIDAKDLPLRRCQNEHPSGQVCPICLEDAKELARDTLIILKEDFGFENIHVVYSGRGYHIRVIDEWALKLDSKARERILSYVSAAEEVTFDDIQKRYIMLSSGYFRVFRLRFGYFIQRINENHLKNIGLKRSTAEKLLDEKTRQDIVEKFVNKGLLAAFPEGVGYRTLLRLFGLSTTFSKAYFDGRVTVDLKRILRLPSTLHSKVGLVATYIGSDEKRLEKFDPFKDAVPEFRKEEVQKAYQEWKELHEG.

Residues aspartate 97, aspartate 99, and aspartate 280 contribute to the active site.

Belongs to the eukaryotic-type primase small subunit family. In terms of assembly, heterodimer of a small subunit (PriS) and a large subunit (PriL). Mg(2+) is required as a cofactor. It depends on Mn(2+) as a cofactor.

Catalytic subunit of DNA primase, an RNA polymerase that catalyzes the synthesis of short RNA molecules used as primers for DNA polymerase during DNA replication. The small subunit contains the primase catalytic core and has DNA synthesis activity on its own. Binding to the large subunit stabilizes and modulates the activity, increasing the rate of DNA synthesis while decreasing the length of the DNA fragments, and conferring RNA synthesis capability. The DNA polymerase activity may enable DNA primase to also catalyze primer extension after primer synthesis. May also play a role in DNA repair. The sequence is that of DNA primase small subunit PriS from Thermococcus kodakarensis (strain ATCC BAA-918 / JCM 12380 / KOD1) (Pyrococcus kodakaraensis (strain KOD1)).